The chain runs to 413 residues: E3 ubiquitin ligase ICP22 (413 aa).

The disordered stretch occupies residues 1-124 (MADIPPDPPA…PPRKSKRPRI (124 aa)). Residues 62–76 (GDLRGGRRRSPRELG) show a composition bias toward basic and acidic residues. Residues 84–97 (SAESTTGTESEGTG) are compositionally biased toward low complexity. Position 189 is a phosphotyrosine; by host (Tyr-189). Disordered stretches follow at residues 289–334 (LETN…SASG) and 370–390 (AERS…PERE). Acidic residues predominate over residues 297 to 309 (SDDEISDATDSDD).

The protein belongs to the herpesviridae ICP22 family. Post-translationally, tyrosine phosphorylated.

The protein localises to the host nucleus. It functions in the pathway protein modification; protein ubiquitination. Functions as an E3 ubiquitin ligase and plays a role in the inhibition of innate immunity by preventing IFN-mediated signaling. Induces the ubiquitination and degradation of host STAT1, STAT2 and IRF9, resulting in the blockade of ISGF3 nuclear translocation. The protein is E3 ubiquitin ligase ICP22 of Human herpesvirus 2 (strain HG52) (HHV-2).